Reading from the N-terminus, the 373-residue chain is Probable pectin lyase D (373 aa).

Positions methionine 1–glycine 24 are cleaved as a signal peptide. Intrachain disulfides connect cysteine 82–cysteine 101 and cysteine 91–cysteine 225. Asparagine 128 carries an N-linked (GlcNAc...) asparagine glycan. Residue arginine 255 is part of the active site. N-linked (GlcNAc...) asparagine glycosylation occurs at asparagine 274. An intrachain disulfide couples cysteine 321 to cysteine 329. Residue asparagine 348 is glycosylated (N-linked (GlcNAc...) asparagine). A compositionally biased stretch (low complexity) spans leucine 354 to serine 366. Residues leucine 354–leucine 373 form a disordered region.

It belongs to the polysaccharide lyase 1 family.

Its subcellular location is the secreted. The enzyme catalyses Eliminative cleavage of (1-&gt;4)-alpha-D-galacturonan methyl ester to give oligosaccharides with 4-deoxy-6-O-methyl-alpha-D-galact-4-enuronosyl groups at their non-reducing ends.. In terms of biological role, pectinolytic enzymes consist of four classes of enzymes: pectin lyase, polygalacturonase, pectin methylesterase and rhamnogalacturonase. Among pectinolytic enzymes, pectin lyase is the most important in depolymerization of pectin, since it cleaves internal glycosidic bonds of highly methylated pectins. The chain is Probable pectin lyase D (pelD) from Aspergillus niger (strain ATCC MYA-4892 / CBS 513.88 / FGSC A1513).